A 341-amino-acid chain; its full sequence is Phenylalanine--tRNA ligase alpha subunit (341 aa).

Residue Glu-256 coordinates Mg(2+).

It belongs to the class-II aminoacyl-tRNA synthetase family. Phe-tRNA synthetase alpha subunit type 1 subfamily. In terms of assembly, tetramer of two alpha and two beta subunits. The cofactor is Mg(2+).

The protein resides in the cytoplasm. It catalyses the reaction tRNA(Phe) + L-phenylalanine + ATP = L-phenylalanyl-tRNA(Phe) + AMP + diphosphate + H(+). In Chlamydia muridarum (strain MoPn / Nigg), this protein is Phenylalanine--tRNA ligase alpha subunit (pheS).